Here is a 491-residue protein sequence, read N- to C-terminus: Protein nucleotidyltransferase YdiU (491 aa).

Residues Gly-88, Gly-90, Arg-91, Lys-111, Asp-123, Gly-124, Arg-174, and Arg-181 each coordinate ATP. Asp-250 functions as the Proton acceptor in the catalytic mechanism. Mg(2+)-binding residues include Asn-251 and Asp-260. Asp-260 serves as a coordination point for ATP.

This sequence belongs to the SELO family. It depends on Mg(2+) as a cofactor. Mn(2+) is required as a cofactor.

The catalysed reaction is L-seryl-[protein] + ATP = 3-O-(5'-adenylyl)-L-seryl-[protein] + diphosphate. It catalyses the reaction L-threonyl-[protein] + ATP = 3-O-(5'-adenylyl)-L-threonyl-[protein] + diphosphate. The enzyme catalyses L-tyrosyl-[protein] + ATP = O-(5'-adenylyl)-L-tyrosyl-[protein] + diphosphate. It carries out the reaction L-histidyl-[protein] + UTP = N(tele)-(5'-uridylyl)-L-histidyl-[protein] + diphosphate. The catalysed reaction is L-seryl-[protein] + UTP = O-(5'-uridylyl)-L-seryl-[protein] + diphosphate. It catalyses the reaction L-tyrosyl-[protein] + UTP = O-(5'-uridylyl)-L-tyrosyl-[protein] + diphosphate. Nucleotidyltransferase involved in the post-translational modification of proteins. It can catalyze the addition of adenosine monophosphate (AMP) or uridine monophosphate (UMP) to a protein, resulting in modifications known as AMPylation and UMPylation. This Bradyrhizobium diazoefficiens (strain JCM 10833 / BCRC 13528 / IAM 13628 / NBRC 14792 / USDA 110) protein is Protein nucleotidyltransferase YdiU.